The following is a 117-amino-acid chain: Mitochondrial zinc maintenance protein 1, mitochondrial (117 aa).

The transit peptide at 1–10 (MSATLSAYRN) directs the protein to the mitochondrion. The interval 91-117 (NESIKQGKKNLGSLAGKKGSSIRSCKD) is disordered.

Belongs to the complex I LYR family. MZM1 subfamily. Interacts with RIP1.

It localises to the mitochondrion matrix. In terms of biological role, assembly factor required for Rieske Fe-S protein RIP1 incorporation into the cytochrome b-c1 (CIII) complex. Functions as a chaperone, binding to this subunit within the mitochondrial matrix and stabilizing it prior to its translocation and insertion into the late CIII dimeric intermediate within the mitochondrial inner membrane. Modulates the mitochondrial matrix zinc pool. This Candida tropicalis (strain ATCC MYA-3404 / T1) (Yeast) protein is Mitochondrial zinc maintenance protein 1, mitochondrial (MZM1).